The chain runs to 367 residues: 3-dehydroquinate synthase (367 aa).

NAD(+) is bound by residues 69–74 (DGESHK), 103–107 (GVIGD), 127–128 (TT), lysine 140, lysine 149, and 167–170 (TLAT). Residues glutamate 182, histidine 245, and histidine 262 each contribute to the Zn(2+) site.

The protein belongs to the sugar phosphate cyclases superfamily. Dehydroquinate synthase family. The cofactor is Co(2+). Zn(2+) is required as a cofactor. It depends on NAD(+) as a cofactor.

Its subcellular location is the cytoplasm. The catalysed reaction is 7-phospho-2-dehydro-3-deoxy-D-arabino-heptonate = 3-dehydroquinate + phosphate. It participates in metabolic intermediate biosynthesis; chorismate biosynthesis; chorismate from D-erythrose 4-phosphate and phosphoenolpyruvate: step 2/7. Catalyzes the conversion of 3-deoxy-D-arabino-heptulosonate 7-phosphate (DAHP) to dehydroquinate (DHQ). The chain is 3-dehydroquinate synthase from Stutzerimonas stutzeri (strain A1501) (Pseudomonas stutzeri).